The sequence spans 360 residues: Protein DVR-1 (360 aa).

The N-terminal stretch at Met1–Val16 is a signal peptide. Positions Thr17 to Arg246 are excised as a propeptide. Residues Asn113, Asn181, and Asn301 are each glycosylated (N-linked (GlcNAc...) asparagine). 3 cysteine pairs are disulfide-bonded: Cys259–Cys325, Cys288–Cys357, and Cys292–Cys359.

Belongs to the TGF-beta family. In terms of assembly, homodimer. As to expression, vegetal region of the egg.

The protein localises to the secreted. Serves to facilitate the differentiation of either mesoderm or endoderm either as a cofactor in an instructive signal or by providing permissive environment. The polypeptide is Protein DVR-1 (dvr1) (Xenopus laevis (African clawed frog)).